Consider the following 524-residue polypeptide: Cysteine--tRNA ligase (524 aa).

Cysteine 29 is a binding site for Zn(2+). Residues 31–41 (PTVQAAPHVGH) carry the 'HIGH' region motif. Zn(2+)-binding residues include cysteine 207, histidine 232, and glutamate 236. Residues 246-258 (ARPASNAASADSP) show a composition bias toward low complexity. The segment at 246–273 (ARPASNAASADSPGPGGGEPGGGEPSSG) is disordered. The span at 259-270 (GPGGGEPGGGEP) shows a compositional bias: gly residues. Positions 291–295 (KMSKS) match the 'KMSKS' region motif. Residue lysine 294 participates in ATP binding.

The protein belongs to the class-I aminoacyl-tRNA synthetase family. In terms of assembly, monomer. Zn(2+) serves as cofactor.

It is found in the cytoplasm. The catalysed reaction is tRNA(Cys) + L-cysteine + ATP = L-cysteinyl-tRNA(Cys) + AMP + diphosphate. The protein is Cysteine--tRNA ligase of Frankia casuarinae (strain DSM 45818 / CECT 9043 / HFP020203 / CcI3).